Here is a 635-residue protein sequence, read N- to C-terminus: UvrABC system protein C (635 aa).

Positions 20–97 constitute a GIY-YIG domain; sequence ERSGVYRMFD…IKKFQPKFNI (78 aa). The UVR domain occupies 207-242; sequence KELQENLSKKMEELSEQMRFEEAAEIRDRIKALSYV.

It belongs to the UvrC family. As to quaternary structure, interacts with UvrB in an incision complex.

The protein resides in the cytoplasm. Its function is as follows. The UvrABC repair system catalyzes the recognition and processing of DNA lesions. UvrC both incises the 5' and 3' sides of the lesion. The N-terminal half is responsible for the 3' incision and the C-terminal half is responsible for the 5' incision. The chain is UvrABC system protein C from Rickettsia bellii (strain RML369-C).